Consider the following 437-residue polypeptide: Bystin (437 aa).

A disordered region spans residues 1 to 105; that stretch reads MPKFKAARGV…DGSDDEDEEW (105 aa). Omega-N-methylarginine is present on Arg40. Residue Ser55 is modified to Phosphoserine. Basic and acidic residues predominate over residues 71–87; the sequence is AEHGTGDKPAAPRERTT. Ser98 carries the phosphoserine modification. Thr156 is subject to Phosphothreonine. Phosphoserine occurs at positions 167 and 414.

The protein belongs to the bystin family. Binds trophinin, tastin and cytokeratins. As to expression, found in the placenta from the sixth week of pregnancy. Was localized in the cytoplasm of the syncytiotrophoblast in the chorionic villi and in endometrial decidual cells at the uteroplacental interface. After week 10, the level decreased and then disappeared from placental villi.

Its subcellular location is the cytoplasm. The protein localises to the nucleus. It is found in the nucleolus. In terms of biological role, required for processing of 20S pre-rRNA precursor and biogenesis of 40S ribosomal subunits. May be required for trophinin-dependent regulation of cell adhesion during implantation of human embryos. The chain is Bystin from Homo sapiens (Human).